The sequence spans 423 residues: POU domain, class 5, transcription factor 1.3 (423 aa).

The disordered stretch occupies residues 85–211 (GALSSGDPSP…GSGNEEDGTT (127 aa)). Basic and acidic residues predominate over residues 94 to 110 (PEGRNEEDHGSISEERS). Composition is skewed to polar residues over residues 111-120 (SGTPSPNSPM), 156-173 (PQQS…GASN), and 194-203 (PSPNNASFGS). The POU-specific domain occupies 207-281 (EDGTTLEEME…LLEQWLGEAE (75 aa)). The segment at residues 301 to 360 (KRKMRTCFDSVLKGRLEGHFMCNQKPGARELAEIAKELGLEKDVVRVWFCNRRQKEKSKS) is a DNA-binding region (homeobox).

This sequence belongs to the POU transcription factor family. Class-5 subfamily. Interacts with the transcription factors tcf7l1/tcf3 and vegt.

It localises to the nucleus. Its function is as follows. Transcription factor that binds to the octamer motif (5'-ATTTGCAT-3'). Antagonizes the activity of nodal/activin signaling during gastrulation to suppress mesendoderm formation. Acts maternally to inhibit vegt and beta-catenin-activated gene transcription, probably by forming a transcriptional repression complex on the promoters of target genes. Binds to an octamer motif in interspersed RNA. The protein is POU domain, class 5, transcription factor 1.3 (pou5f1.3) of Xenopus tropicalis (Western clawed frog).